Reading from the N-terminus, the 260-residue chain is Activator of 90 kDa heat shock protein ATPase homolog 2 (260 aa).

This sequence belongs to the AHA1 family.

Its function is as follows. Co-chaperone that stimulates HSP90 ATPase activity. The sequence is that of Activator of 90 kDa heat shock protein ATPase homolog 2 (AHSA2) from Bos taurus (Bovine).